Here is a 527-residue protein sequence, read N- to C-terminus: Amine oxidase [flavin-containing] A (527 aa).

Residue M1 is modified to N-acetylmethionine. The Cytoplasmic portion of the chain corresponds to 1–497 (MESLQKTSDA…PSFWERNLPS (497 aa)). S383 carries the post-translational modification Phosphoserine. C406 carries the post-translational modification S-8alpha-FAD cysteine. A helical; Anchor for type IV membrane protein transmembrane segment spans residues 498–518 (VSGLLKIVGFSTSITALWFVM). Topologically, residues 519–527 (YRFRLLSRS) are mitochondrial intermembrane. The tract at residues 520–522 (RFR) is interaction with membrane phospholipid headgroups.

Belongs to the flavin monoamine oxidase family. As to quaternary structure, monomer, homo- or heterodimer (containing two subunits of similar size). Each subunit contains a covalently bound flavin. Enzymatically active as monomer. Requires FAD as cofactor.

The protein resides in the mitochondrion outer membrane. The catalysed reaction is a secondary aliphatic amine + O2 + H2O = a primary amine + an aldehyde + H2O2. It carries out the reaction a primary methyl amine + O2 + H2O = an aldehyde + H2O2 + NH4(+). It catalyses the reaction (R)-adrenaline + O2 + H2O = (R)-3,4-dihydroxymandelaldehyde + methylamine + H2O2. The enzyme catalyses dopamine + O2 + H2O = 3,4-dihydroxyphenylacetaldehyde + H2O2 + NH4(+). The catalysed reaction is tyramine + O2 + H2O = (4-hydroxyphenyl)acetaldehyde + H2O2 + NH4(+). It carries out the reaction (R)-noradrenaline + O2 + H2O = (R)-3,4-dihydroxymandelaldehyde + H2O2 + NH4(+). It catalyses the reaction serotonin + O2 + H2O = (5-hydroxyindol-3-yl)acetaldehyde + H2O2 + NH4(+). The enzyme catalyses kynuramine + O2 + H2O = 3-(2-aminophenyl)-3-oxopropanal + H2O2 + NH4(+). The catalysed reaction is tryptamine + O2 + H2O = indole-3-acetaldehyde + H2O2 + NH4(+). It carries out the reaction 2-phenylethylamine + O2 + H2O = 2-phenylacetaldehyde + H2O2 + NH4(+). Catalyzes the oxidative deamination of primary and some secondary amine such as neurotransmitters, with concomitant reduction of oxygen to hydrogen peroxide and has important functions in the metabolism of neuroactive and vasoactive amines in the central nervous system and peripheral tissues. Preferentially oxidizes serotonin. Also catalyzes the oxidative deamination of kynuramine to 3-(2-aminophenyl)-3-oxopropanal that can spontaneously condense to 4-hydroxyquinoline. The sequence is that of Amine oxidase [flavin-containing] A from Bos taurus (Bovine).